We begin with the raw amino-acid sequence, 323 residues long: Tetraacyldisaccharide 4'-kinase (323 aa).

T56–T63 provides a ligand contact to ATP.

The protein belongs to the LpxK family.

It carries out the reaction a lipid A disaccharide + ATP = a lipid IVA + ADP + H(+). Its pathway is glycolipid biosynthesis; lipid IV(A) biosynthesis; lipid IV(A) from (3R)-3-hydroxytetradecanoyl-[acyl-carrier-protein] and UDP-N-acetyl-alpha-D-glucosamine: step 6/6. In terms of biological role, transfers the gamma-phosphate of ATP to the 4'-position of a tetraacyldisaccharide 1-phosphate intermediate (termed DS-1-P) to form tetraacyldisaccharide 1,4'-bis-phosphate (lipid IVA). The protein is Tetraacyldisaccharide 4'-kinase of Legionella pneumophila (strain Lens).